We begin with the raw amino-acid sequence, 459 residues long: Cysteine--tRNA ligase (459 aa).

Cys-28 lines the Zn(2+) pocket. Residues 30–40 carry the 'HIGH' region motif; that stretch reads VTVYDLCHFGH. Zn(2+) contacts are provided by Cys-209, His-234, and Glu-238. Residues 266–270 carry the 'KMSKS' region motif; the sequence is KMSKS. Lys-269 serves as a coordination point for ATP.

Belongs to the class-I aminoacyl-tRNA synthetase family. Monomer. It depends on Zn(2+) as a cofactor.

The protein resides in the cytoplasm. It carries out the reaction tRNA(Cys) + L-cysteine + ATP = L-cysteinyl-tRNA(Cys) + AMP + diphosphate. In Actinobacillus succinogenes (strain ATCC 55618 / DSM 22257 / CCUG 43843 / 130Z), this protein is Cysteine--tRNA ligase.